Reading from the N-terminus, the 1129-residue chain is Phospholipid-transporting ATPase 11C (1129 aa).

Residues methionine 1–aspartate 83 are Cytoplasmic-facing. A helical membrane pass occupies residues threonine 84–isoleucine 104. Residues lysine 105–serine 287 lie on the Extracellular side of the membrane. Residues isoleucine 288 to threonine 308 form a helical membrane-spanning segment. Residues leucine 309–aspartate 343 lie on the Cytoplasmic side of the membrane. Residues phenylalanine 344–glutamate 364 form a helical membrane-spanning segment. Topologically, residues methionine 365–tyrosine 876 are extracellular. Aspartate 409 serves as the catalytic 4-aspartylphosphate intermediate. ATP-binding residues include aspartate 409, lysine 410, and threonine 411. Aspartate 409 is a Mg(2+) binding site. Threonine 411 contacts Mg(2+). Residue serine 442 is modified to Phosphoserine. The ATP site is built by glutamate 498, phenylalanine 540, lysine 563, and arginine 594. Positions aspartate 607–isoleucine 643 form a coiled coil. Residues threonine 674, glycine 675, and aspartate 676 each coordinate ATP. A coiled-coil region spans residues threonine 695 to leucine 726. 2 residues coordinate ATP: arginine 789 and lysine 795. Aspartate 816 serves as a coordination point for Mg(2+). ATP contacts are provided by asparagine 819 and aspartate 820. Aspartate 820 lines the Mg(2+) pocket. Residues phenylalanine 877–phenylalanine 897 form a helical membrane-spanning segment. The Cytoplasmic segment spans residues serine 898–alanine 905. The chain crosses the membrane as a helical span at residues alanine 906–leucine 926. Over glutamate 927–glutamine 952 the chain is Extracellular. A helical transmembrane segment spans residues leucine 953–glycine 973. Topologically, residues threonine 974–lysine 988 are cytoplasmic. A helical transmembrane segment spans residues isoleucine 989–leucine 1009. Topologically, residues lysine 1010–histidine 1023 are extracellular. The helical transmembrane segment at phenylalanine 1024–isoleucine 1044 threads the bilayer. Topologically, residues tryptophan 1045 to threonine 1066 are cytoplasmic. The chain crosses the membrane as a helical span at residues tryptophan 1067–valine 1087. The Extracellular portion of the chain corresponds to lysine 1088–leucine 1129. 3 positions are modified to phosphoserine: serine 1105, serine 1113, and serine 1123. The Di-leucine motif signature appears at serine 1113–leucine 1118.

It belongs to the cation transport ATPase (P-type) (TC 3.A.3) family. Type IV subfamily. In terms of assembly, component of a P4-ATPase flippase complex which consists of a catalytic alpha subunit ATP11C and an accessory beta subunit TMEM30A. It depends on Mg(2+) as a cofactor. Post-translationally, proteolytically cleaved by CASP3, CASP6 and CASP7. Phosphorylated at Ser-1113 likely by PRKCA; this creates a functional di-leucine motif that is sufficient for endocytosis. As to expression, widely expressed. Expressed in retina, brain, liver and testes (at protein level). Expressed in lung, bone marrow, lymph nodes, prostate, ovary and uterus. Expressed in fetus.

The protein localises to the cell membrane. The protein resides in the endoplasmic reticulum membrane. Its subcellular location is the early endosome membrane. It localises to the recycling endosome membrane. It carries out the reaction ATP + H2O + phospholipidSide 1 = ADP + phosphate + phospholipidSide 2.. It catalyses the reaction a 1,2-diacyl-sn-glycero-3-phospho-L-serine(out) + ATP + H2O = a 1,2-diacyl-sn-glycero-3-phospho-L-serine(in) + ADP + phosphate + H(+). The enzyme catalyses a 1,2-diacyl-sn-glycero-3-phosphoethanolamine(out) + ATP + H2O = a 1,2-diacyl-sn-glycero-3-phosphoethanolamine(in) + ADP + phosphate + H(+). Functionally, catalytic component of a P4-ATPase flippase complex which catalyzes the hydrolysis of ATP coupled to the transport of aminophospholipids, phosphatidylserines (PS) and phosphatidylethanolamines (PE), from the outer to the inner leaflet of the plasma membrane. Major PS-flippase in immune cell subsets. In erythrocyte plasma membrane, it is required to maintain PS in the inner leaflet preventing its exposure on the surface. This asymmetric distribution is critical for the survival of erythrocytes in circulation since externalized PS is a phagocytic signal for erythrocyte clearance by splenic macrophages. Required for B cell differentiation past the pro-B cell stage. Seems to mediate PS flipping in pro-B cells. May be involved in the transport of cholestatic bile acids. The sequence is that of Phospholipid-transporting ATPase 11C from Mus musculus (Mouse).